A 1163-amino-acid polypeptide reads, in one-letter code: Hamartin (1163 aa).

Residue lysine 30 forms a Glycyl lysine isopeptide (Lys-Gly) (interchain with G-Cter in ubiquitin) linkage. Residues 295-316 are compositionally biased toward polar residues; it reads SSYVDTQNSYGGATSTPSSTSR. 2 disordered regions span residues 295–337 and 353–594; these read SSYV…STRP and CGMT…QRGV. The segment covering 321–337 has biased composition (low complexity); sequence STPGQLPQSLSSLSTRP. A compositionally biased stretch (pro residues) spans 393–402; the sequence is TSPPPAPPCP. The interval 403–787 is mediates interaction with WDR45B; the sequence is QDDCAHGPAS…QIRQLQHDRE (385 aa). Over residues 474–487 the composition is skewed to basic and acidic residues; that stretch reads EKDKEEAAISKELS. A phosphoserine mark is found at serine 487, serine 505, serine 511, serine 521, serine 595, and serine 598. The span at 512-530 shows a compositional bias: polar residues; sequence LSGSQRKTHSAASGTQGFS. 2 coiled-coil regions span residues 721–919 and 970–994; these read RKVI…LAKK and EKDG…ERLD. A compositionally biased stretch (basic and acidic residues) spans 1008 to 1020; the sequence is NEEAAGHNGETRT. The disordered stretch occupies residues 1008–1163; that stretch reads NEEAAGHNGE…DYNETHHEHS (156 aa). The segment covering 1029 to 1046 has biased composition (low complexity); it reads SCGGRVTGGSSSSSSELS. Over residues 1066–1083 the composition is skewed to polar residues; sequence EPSSSIPTTVGSLPSSKS. The span at 1088-1099 shows a compositional bias: basic and acidic residues; sequence KTRELFRNKSES. Residue serine 1097 is modified to Phosphoserine. The span at 1131 to 1146 shows a compositional bias: low complexity; sequence PPSLDAPHPSSPSSDS. Positions 1154 to 1163 are enriched in basic and acidic residues; the sequence is DYNETHHEHS.

In terms of assembly, component of the TSC-TBC complex (also named Rhebulator complex), composed of 2 molecules of TSC1, 2 molecules of TSC2 and 1 molecule of TBC1D7. Probably forms a complex composed of chaperones HSP90 and HSP70, co-chaperones STIP1/HOP, CDC37, PPP5C, PTGES3/p23, TSC1 and client protein TSC2. Forms a complex composed of chaperones HSP90 and HSP70, co-chaperones CDC37, PPP5C, TSC1 and client protein TSC2, CDK4, AKT, RAF1 and NR3C1; this complex does not contain co-chaperones STIP1/HOP and PTGES3/p23. Forms a complex containing HSP90AA1, TSC1 and TSC2; TSC1 is required to recruit TCS2 to the complex. Interacts (via C-terminus) with the closed form of HSP90AA1 (via the middle domain and TPR repeat-binding motif). Interacts with DOCK7. Interacts with FBXW5. Interacts with WDR45B. Interacts with RPAP3 and URI1. Post-translationally, phosphorylation at Ser-505 does not affect interaction with TSC2. 'Lys-63'-linked ubiquitinated at Lys-30 by PELI1; the ubiquitination promotes TSC1/TSC2 complex stability. As to expression, highly expressed in brain, spleen and kidney, followed by liver and heart.

The protein resides in the lysosome membrane. It is found in the cytoplasm. It localises to the cytosol. Its function is as follows. Non-catalytic component of the TSC-TBC complex, a multiprotein complex that acts as a negative regulator of the canonical mTORC1 complex, an evolutionarily conserved central nutrient sensor that stimulates anabolic reactions and macromolecule biosynthesis to promote cellular biomass generation and growth. The TSC-TBC complex acts as a GTPase-activating protein (GAP) for the small GTPase RHEB, a direct activator of the protein kinase activity of mTORC1. In absence of nutrients, the TSC-TBC complex inhibits mTORC1, thereby preventing phosphorylation of ribosomal protein S6 kinase (RPS6KB1 and RPS6KB2) and EIF4EBP1 (4E-BP1) by the mTORC1 signaling. The TSC-TBC complex is inactivated in response to nutrients, relieving inhibition of mTORC1. Within the TSC-TBC complex, TSC1 stabilizes TSC2 and prevents TSC2 self-aggregation. Involved in microtubule-mediated protein transport via its ability to regulate mTORC1 signaling. Also acts as a co-chaperone for HSP90AA1 facilitating HSP90AA1 chaperoning of protein clients such as kinases, TSC2 and glucocorticoid receptor NR3C1. Increases ATP binding to HSP90AA1 and inhibits HSP90AA1 ATPase activity. Competes with the activating co-chaperone AHSA1 for binding to HSP90AA1, thereby providing a reciprocal regulatory mechanism for chaperoning of client proteins. Recruits TSC2 to HSP90AA1 and stabilizes TSC2 by preventing the interaction between TSC2 and ubiquitin ligase HERC1. In Rattus norvegicus (Rat), this protein is Hamartin.